The primary structure comprises 178 residues: Imidazoleglycerol-phosphate dehydratase (178 aa).

This sequence belongs to the imidazoleglycerol-phosphate dehydratase family.

The protein localises to the cytoplasm. It catalyses the reaction D-erythro-1-(imidazol-4-yl)glycerol 3-phosphate = 3-(imidazol-4-yl)-2-oxopropyl phosphate + H2O. It participates in amino-acid biosynthesis; L-histidine biosynthesis; L-histidine from 5-phospho-alpha-D-ribose 1-diphosphate: step 6/9. The polypeptide is Imidazoleglycerol-phosphate dehydratase (Archaeoglobus fulgidus (strain ATCC 49558 / DSM 4304 / JCM 9628 / NBRC 100126 / VC-16)).